Reading from the N-terminus, the 165-residue chain is SsrA-binding protein (165 aa).

This sequence belongs to the SmpB family.

It localises to the cytoplasm. Required for rescue of stalled ribosomes mediated by trans-translation. Binds to transfer-messenger RNA (tmRNA), required for stable association of tmRNA with ribosomes. tmRNA and SmpB together mimic tRNA shape, replacing the anticodon stem-loop with SmpB. tmRNA is encoded by the ssrA gene; the 2 termini fold to resemble tRNA(Ala) and it encodes a 'tag peptide', a short internal open reading frame. During trans-translation Ala-aminoacylated tmRNA acts like a tRNA, entering the A-site of stalled ribosomes, displacing the stalled mRNA. The ribosome then switches to translate the ORF on the tmRNA; the nascent peptide is terminated with the 'tag peptide' encoded by the tmRNA and targeted for degradation. The ribosome is freed to recommence translation, which seems to be the essential function of trans-translation. The polypeptide is SsrA-binding protein (Ruthia magnifica subsp. Calyptogena magnifica).